The sequence spans 567 residues: Hexose transporter HXT16 (567 aa).

A compositionally biased stretch (polar residues) spans 1 to 19 (MASEQSSPEINADNLNSSA). Residues 1–32 (MASEQSSPEINADNLNSSAADVHVQPPGEKEW) form a disordered region. The Cytoplasmic portion of the chain corresponds to 1–55 (MASEQSSPEINADNLNSSAADVHVQPPGEKEWSDGFYDKEVINGNTPDAPKRGFL). Residues 56–76 (GYLIIYLLCYPVSFGGFLPGW) traverse the membrane as a helical segment. Residues 77 to 112 (DSGITAGFINMDNFKMNFGSYKHSTGEYYLSNVRMG) lie on the Extracellular side of the membrane. The chain crosses the membrane as a helical span at residues 113 to 133 (LLVAMFSVGCSIGGVAFARLA). Over 134 to 139 (DTLGRR) the chain is Cytoplasmic. A helical membrane pass occupies residues 140 to 160 (LAIVIVVLVYMVGAIIQISSN). Residues 161 to 170 (HKWYQYFVGK) lie on the Extracellular side of the membrane. Residues 171–191 (IIYGLGAGGCSVLCPMLLSEI) form a helical membrane-spanning segment. Topologically, residues 192-197 (APTDLR) are cytoplasmic. The chain crosses the membrane as a helical span at residues 198–218 (GGLVSLYQLNMTFGIFLGYCS). Residues 219–232 (VYGTRKYSNTAQWR) lie on the Extracellular side of the membrane. Residues 233–253 (IPVGLCFLWALIIIVGMLLVP) form a helical membrane-spanning segment. The Cytoplasmic segment spans residues 254–336 (ESPRYLIECE…VQTFLQLTGE (83 aa)). A helical transmembrane segment spans residues 337–353 (NYFFFYGTTIFKSVGLT). The Extracellular segment spans residues 354 to 359 (DGFETS). A helical membrane pass occupies residues 360-377 (IVLGTVNFFSTIIAVMVV). The Cytoplasmic portion of the chain corresponds to 378 to 384 (DKIGRRK). Residues 385 to 405 (CLLFGAASMMACMVIFASIGV) form a helical membrane-spanning segment. Residues 406–427 (KCLYPHGQDGPSSKGAGNAMIV) are Extracellular-facing. The helical transmembrane segment at 428 to 448 (FTCFYIFCFATTWAPVAYIVV) threads the bilayer. Residues 449-465 (AESFPSKVKSKAMSIST) are Cytoplasmic-facing. A helical membrane pass occupies residues 466–486 (AFNWLWQFLIGFFTPFITGSI). Histidine 487 is a topological domain (extracellular). The chain crosses the membrane as a helical span at residues 488–508 (FYYGYVFVGCLVAMFLYVFFF). The Cytoplasmic segment spans residues 509-567 (LPETIGLSLEETQLLYEEGIKPWKSASWVPPSRRGASSRETEAKKKSWKEVLKFPKSFN). Positions 533–555 (SASWVPPSRRGASSRETEAKKKS) are disordered. Positions 545 to 555 (SSRETEAKKKS) are enriched in basic and acidic residues.

This sequence belongs to the major facilitator superfamily. Sugar transporter (TC 2.A.1.1) family.

Its subcellular location is the membrane. In terms of biological role, probable glucose transporter. This chain is Hexose transporter HXT16 (HXT16), found in Saccharomyces cerevisiae (strain ATCC 204508 / S288c) (Baker's yeast).